Consider the following 327-residue polypeptide: tRNA N6-adenosine threonylcarbamoyltransferase (327 aa).

Fe cation is bound by residues histidine 109 and histidine 113. Residues 132 to 136 (MVSGG), aspartate 165, glycine 178, aspartate 182, and asparagine 268 each bind substrate. Aspartate 296 contacts Fe cation.

This sequence belongs to the KAE1 / TsaD family. Fe(2+) serves as cofactor.

Its subcellular location is the cytoplasm. It catalyses the reaction L-threonylcarbamoyladenylate + adenosine(37) in tRNA = N(6)-L-threonylcarbamoyladenosine(37) in tRNA + AMP + H(+). Its function is as follows. Required for the formation of a threonylcarbamoyl group on adenosine at position 37 (t(6)A37) in tRNAs that read codons beginning with adenine. Is involved in the transfer of the threonylcarbamoyl moiety of threonylcarbamoyl-AMP (TC-AMP) to the N6 group of A37, together with TsaE and TsaB. TsaD likely plays a direct catalytic role in this reaction. The polypeptide is tRNA N6-adenosine threonylcarbamoyltransferase (Thermotoga petrophila (strain ATCC BAA-488 / DSM 13995 / JCM 10881 / RKU-1)).